A 568-amino-acid chain; its full sequence is Urease subunit alpha (568 aa).

Positions 130-568 constitute a Urease domain; the sequence is GGIDTHIHFI…LPMAQRYFLF (439 aa). 3 residues coordinate Ni(2+): His-135, His-137, and Lys-218. The residue at position 218 (Lys-218) is an N6-carboxylysine. His-220 lines the substrate pocket. Ni(2+)-binding residues include His-247 and His-273. Catalysis depends on His-321, which acts as the Proton donor. Position 361 (Asp-361) interacts with Ni(2+).

Belongs to the metallo-dependent hydrolases superfamily. Urease alpha subunit family. In terms of assembly, heterotrimer of UreA (gamma), UreB (beta) and UreC (alpha) subunits. Three heterotrimers associate to form the active enzyme. Ni cation serves as cofactor. Carboxylation allows a single lysine to coordinate two nickel ions.

It is found in the cytoplasm. The catalysed reaction is urea + 2 H2O + H(+) = hydrogencarbonate + 2 NH4(+). It participates in nitrogen metabolism; urea degradation; CO(2) and NH(3) from urea (urease route): step 1/1. The sequence is that of Urease subunit alpha from Burkholderia orbicola (strain MC0-3).